A 966-amino-acid chain; its full sequence is SYGYDEKSAGGISVPGPMGPSGPRGLPGPPGPGPQGFQGPPGEPGEPGSGPMGPRGPPGPPGKNGDDGEAGKPGRPGERGPPGPQGARGLPGTAGLPGMKGHRGFSGLDGAKGDAGPAGPKGEPGSPGENGAPGQMGPRGLPGERGRPGASGPAGARGNDGATGAAGPPGPTGPAGPPGFPGAVGAKGEAGPQGARGSEGPQGVRGEPGPPGPAGAAGPAGNPGADGQPGAKGANGAPGIAGAPGFPGARGPSGPQGPSGPPGPKGNSGEPGAPGNKGDTGAKGEPGPTGIQGPPGPAGEEGKRGARGEPGPTGLPGPPGERGGPGSRGFPGADGVAGPKGPAGERGSPGPAGPKGSPGEAGRPGEAGLPGAKGLTGSPGSPGPDGKTGPPGPAGQDGRPGPPGPPGARGQAGVMGFPGPKGAAGEPGKAGERGVPGPPGAVGPAGKDGEAGAQGPPGPAGPAGERGEQGPAGSPGFQGLPGPAGPPGEAGKPGEQGVPGDLGAPGPSGARGERGFPGERGVQGPPGPAGPRGSNGAPGGAPGSQGAPGLQGMPGERGAAGLPGPKGDRGDAGPKGTDGAPGKDGVRGLTGPIGPPGPAGAPGDKGESGPSGPAGPTGARGAPGDRGEPGPPGPAGFAGPPGADGQPGAKGEPGDAGAKGDAGPPGPAGPTGPPGPIGNVGAPGPKGARGSAGPPGATGFPGAAGRVGPPGPSGNAGPPGPPGPVGKEGGKGPRGETGPAGEKGSPGADGPAGAPGTPGPQGISGQRGVVGLPGQRGERGFPGLPGPSGEPGKQGPSGSSGERGPPGPVGPPGLAGPPGESGREGPGAEGSPGRGKNGDRGETGPAGPAGPAGPAGARGPAGPQGPRGDKGETGEQGDRGIKGHRGFSGLQGPAGPPGSPGEQGPSGASGPAGPRGPPGSAGSPGKDGLNGLPGPIGPPGPRGRTGDAGPVGPPGPPGPPGPPGPP.

Positions 1–966 (SYGYDEKSAG…PGPPGPPGPP (966 aa)) are disordered. Allysine is present on Lys-7. Phosphoserine is present on Ser-8. 11 positions are modified to 4-hydroxyproline: Pro-27, Pro-30, Pro-32, Pro-41, Pro-44, Pro-47, Pro-61, Pro-76, Pro-82, Pro-91, and Pro-97. Positions 64–78 (NGDDGEAGKPGRPGE) are enriched in basic and acidic residues. Residue Lys-100 is modified to 5-hydroxylysine; alternate. An O-linked (Gal...) hydroxylysine; alternate glycan is attached at Lys-100. Ser-106 bears the Phosphoserine mark. A compositionally biased stretch (low complexity) spans 114 to 130 (DAGPAGPKGEPGSPGEN). 4-hydroxyproline occurs at positions 124, 127, 133, 142, 148, 169, 178, 181, 208, 211, 223, 229, 238, 244, 247, and 262. A compositionally biased stretch (low complexity) spans 148 to 166 (PGASGPAGARGNDGATGAA). Pro residues predominate over residues 168 to 180 (PPGPTGPAGPPGF). Low complexity predominate over residues 214 to 253 (AGAAGPAGNPGADGQPGAKGANGAPGIAGAPGFPGARGPS). Lys-265 carries the post-translational modification 5-hydroxylysine. 8 positions are modified to 4-hydroxyproline: Pro-271, Pro-274, Pro-286, Pro-295, Pro-310, Pro-316, Pro-325, and Pro-331. The segment covering 320-329 (GERGGPGSRG) has biased composition (gly residues). At Lys-340 the chain carries 5-hydroxylysine. 27 positions are modified to 4-hydroxyproline: Pro-349, Pro-358, Pro-364, Pro-370, Pro-379, Pro-382, Pro-391, Pro-400, Pro-406, Pro-418, Pro-427, Pro-436, Pro-439, Pro-457, Pro-475, Pro-481, Pro-487, Pro-493, Pro-499, Pro-505, Pro-517, Pro-526, Pro-538, Pro-542, Pro-548, Pro-554, and Pro-563. The span at 373–399 (KGLTGSPGSPGPDGKTGPPGPAGQDGR) shows a compositional bias: low complexity. The segment covering 408–427 (ARGQAGVMGFPGPKGAAGEP) has biased composition (low complexity). Residues 469–496 (QGPAGSPGFQGLPGPAGPPGEAGKPGEQ) show a composition bias toward low complexity. A 5-hydroxylysine modification is found at Lys-575. Pro-581, Pro-596, and Pro-602 each carry 4-hydroxyproline. Residues 608 to 622 (SGPSGPAGPTGARGA) are compositionally biased toward low complexity. The residue at position 611 (Ser-611) is a Phosphoserine. 4-hydroxyproline is present on residues Pro-623, Pro-629, Pro-632, Pro-641, Pro-647, Pro-665, Pro-674, and Pro-683. Residues 635–662 (AGFAGPPGADGQPGAKGEPGDAGAKGDA) are compositionally biased toward low complexity. Pro residues predominate over residues 664–676 (PPGPAGPTGPPGP). At Lys-686 the chain carries 5-hydroxylysine. Over residues 691–707 (SAGPPGATGFPGAAGRV) the composition is skewed to low complexity. 4-hydroxyproline occurs at positions 695 and 701. 3-hydroxyproline is present on Pro-709. 4-hydroxyproline occurs at positions 710, 719, 722, 746, 755, 773, 782, 785, 791, 806, 812, 818, 826, and 832. Positions 736 to 755 (ETGPAGEKGSPGADGPAGAP) are enriched in low complexity. Pro residues predominate over residues 805–815 (PPGPVGPPGLA). Residues 824-835 (EGPGAEGSPGRG) are compositionally biased toward gly residues. Over residues 852–866 (AGPAGARGPAGPQGP) the composition is skewed to low complexity. Over residues 867-881 (RGDKGETGEQGDRGI) the composition is skewed to basic and acidic residues. Lys-870 is subject to 5-hydroxylysine. Lys-882 bears the 5-hydroxylysine; alternate mark. An O-linked (Gal...) hydroxylysine; alternate glycan is attached at Lys-882. Pro-897, Pro-900, Pro-918, and Pro-933 each carry 4-hydroxyproline. Positions 900 to 933 (PGEQGPSGASGPAGPRGPPGSAGSPGKDGLNGLP) are enriched in low complexity. Position 938 is a 3-hydroxyproline (Pro-938). A 4-hydroxyproline modification is found at Pro-939. Positions 951–966 (VGPPGPPGPPGPPGPP) are enriched in pro residues. A 3-hydroxyproline modification is found at Pro-953. The residue at position 954 (Pro-954) is a 4-hydroxyproline. Residue Pro-956 is modified to 3-hydroxyproline. Residue Pro-957 is modified to 4-hydroxyproline. Pro-959 is subject to 3-hydroxyproline. 3 positions are modified to 4-hydroxyproline: Pro-960, Pro-963, and Pro-966.

The protein belongs to the fibrillar collagen family. As to quaternary structure, trimers of one alpha 2(I) and two alpha 1(I) chains. Post-translationally, contains mostly 4-hydroxyproline. Proline residues at the third position of the tripeptide repeating unit (G-X-Y) are hydroxylated in some or all of the chains. Contains 3-hydroxyproline at a few sites. This modification occurs on the first proline residue in the sequence motif Gly-Pro-Hyp, where Hyp is 4-hydroxyproline. In terms of processing, lysine residues at the third position of the tripeptide repeating unit (G-X-Y) are 5-hydroxylated in some or all of the chains. Post-translationally, O-glycosylated on hydroxylated lysine residues. The O-linked glycan consists of a Glc-Gal disaccharide. In terms of tissue distribution, expressed in bones.

It localises to the secreted. The protein resides in the extracellular space. The protein localises to the extracellular matrix. In terms of biological role, type I collagen is a member of group I collagen (fibrillar forming collagen). This Bradypus variegatus (Brown-throated three-fingered sloth) protein is Collagen alpha-1(I) chain.